The chain runs to 491 residues: Ribonuclease G (491 aa).

An S1 motif domain is found at 40–129; sequence GNIYKGRVTR…LTTDITLPSR (90 aa). The Mg(2+) site is built by aspartate 305 and aspartate 348.

This sequence belongs to the RNase E/G family. RNase G subfamily. In terms of assembly, homodimer, in equilibrium with possible higher multimers. Mg(2+) serves as cofactor.

It localises to the cytoplasm. Functionally, an endonuclease that acts in the processing of the 5'-end of 16S rRNA and 23S rRNA. It prefers 5'-monophosphorylated substrates and cleaves single-stranded sites rich in A and U residues; contributes to tRNA processing and mRNA turnover. The protein is Ribonuclease G (rng) of Haemophilus influenzae (strain ATCC 51907 / DSM 11121 / KW20 / Rd).